A 445-amino-acid polypeptide reads, in one-letter code: 6-phosphogluconate dehydrogenase, decarboxylating (445 aa).

NADP(+) is bound by residues alanine 1–glycine 4, asparagine 22–serine 24, valine 63–alanine 65, and asparagine 91. Residues asparagine 91 and serine 117–glycine 119 contribute to the substrate site. Catalysis depends on lysine 172, which acts as the Proton acceptor. Residue histidine 175–asparagine 176 participates in substrate binding. Glutamate 179 (proton donor) is an active-site residue. The substrate site is built by tyrosine 180, lysine 249, arginine 276, arginine 434, and histidine 440.

Belongs to the 6-phosphogluconate dehydrogenase family. Homodimer.

The catalysed reaction is 6-phospho-D-gluconate + NADP(+) = D-ribulose 5-phosphate + CO2 + NADPH. It participates in carbohydrate degradation; pentose phosphate pathway; D-ribulose 5-phosphate from D-glucose 6-phosphate (oxidative stage): step 3/3. Its function is as follows. Catalyzes the oxidative decarboxylation of 6-phosphogluconate to ribulose 5-phosphate and CO(2), with concomitant reduction of NADP to NADPH. The chain is 6-phosphogluconate dehydrogenase, decarboxylating (gnd) from Shigella dysenteriae.